The following is a 187-amino-acid chain: Guanylate kinase (187 aa).

Serine 2 carries the post-translational modification N-acetylserine. A Guanylate kinase-like domain is found at serine 2–phenylalanine 184. Residue glycine 9–serine 16 participates in ATP binding. GMP is bound by residues serine 35, arginine 39–arginine 42, tyrosine 51, glutamate 70, tyrosine 79–serine 81, and aspartate 101. Serine 149 carries the post-translational modification Phosphoserine. Tyrosine 157 carries the post-translational modification Phosphotyrosine.

The protein belongs to the guanylate kinase family. As to quaternary structure, monomer.

It carries out the reaction GMP + ATP = GDP + ADP. Catalyzes the reversible transfer of the terminal phosphoryl group of ATP to the acceptor molecule GMP. Essential for recycling GMP and indirectly, cGMP. This is Guanylate kinase (GUK1) from Saccharomyces cerevisiae (strain ATCC 204508 / S288c) (Baker's yeast).